The sequence spans 264 residues: Thymidylate synthase (264 aa).

Residues Arg21 and 126–127 (RR) each bind dUMP. The Nucleophile role is filled by Cys146. DUMP is bound by residues 166–169 (RSAD), Asn177, and 207–209 (HLY). Asp169 lines the (6R)-5,10-methylene-5,6,7,8-tetrahydrofolate pocket. A (6R)-5,10-methylene-5,6,7,8-tetrahydrofolate-binding site is contributed by Ala263.

Belongs to the thymidylate synthase family. Bacterial-type ThyA subfamily. In terms of assembly, homodimer.

The protein localises to the cytoplasm. The enzyme catalyses dUMP + (6R)-5,10-methylene-5,6,7,8-tetrahydrofolate = 7,8-dihydrofolate + dTMP. The protein operates within pyrimidine metabolism; dTTP biosynthesis. Its function is as follows. Catalyzes the reductive methylation of 2'-deoxyuridine-5'-monophosphate (dUMP) to 2'-deoxythymidine-5'-monophosphate (dTMP) while utilizing 5,10-methylenetetrahydrofolate (mTHF) as the methyl donor and reductant in the reaction, yielding dihydrofolate (DHF) as a by-product. This enzymatic reaction provides an intracellular de novo source of dTMP, an essential precursor for DNA biosynthesis. The polypeptide is Thymidylate synthase (Halorhodospira halophila (strain DSM 244 / SL1) (Ectothiorhodospira halophila (strain DSM 244 / SL1))).